Consider the following 312-residue polypeptide: MPRPSEPSPYVEFDRSQWRSLRMSTPLKLSEDELVRLRGMGEKLDLLEVEEVYLPLARLIHLQVAARQRLFATTAEFLGEPQQNPDRPVPFIIGVAGSVAVGKSTTARVLQALLARWEHHPRVDLVTTDGFLYPNAELARRNLMHRKGFPESYNRRALMRFVTAVKSGADEAAAPVYSHLLYDIVPGEYQIVRHPDILILEGLNVLQTGPALMVSDLFDFSVYVDARIEDIEQWYISRFLTMRSTAFADPASHFHSYSTLTDEQAVFAARDIWHSINRPNLIENILPTRPRATLVLRKDADHSINRLRLRKL.

Residue 97-104 participates in ATP binding; that stretch reads GSVAVGKS.

It belongs to the prokaryotic pantothenate kinase family.

It is found in the cytoplasm. The catalysed reaction is (R)-pantothenate + ATP = (R)-4'-phosphopantothenate + ADP + H(+). It functions in the pathway cofactor biosynthesis; coenzyme A biosynthesis; CoA from (R)-pantothenate: step 1/5. The sequence is that of Pantothenate kinase from Mycolicibacterium smegmatis (strain ATCC 700084 / mc(2)155) (Mycobacterium smegmatis).